Here is a 269-residue protein sequence, read N- to C-terminus: Probable cytochrome c oxidase subunit 2 (269 aa).

The next 3 membrane-spanning stretches (helical) occupy residues 8–28, 50–70, and 87–107; these read ITLI…PLPW, LLYI…FVCI, and ILIE…IAVP. Residues His189, Cys224, Cys228, and His232 each contribute to the Cu cation site.

Belongs to the cytochrome c oxidase subunit 2 family. It depends on Cu cation as a cofactor. Heme is required as a cofactor.

The protein resides in the cell membrane. The enzyme catalyses 4 Fe(II)-[cytochrome c] + O2 + 8 H(+)(in) = 4 Fe(III)-[cytochrome c] + 2 H2O + 4 H(+)(out). Its function is as follows. Subunits I and II form the functional core of the enzyme complex. Electrons originating in cytochrome c are transferred via heme a and Cu(A) to the binuclear center formed by heme a3 and Cu(B). This Rickettsia bellii (strain RML369-C) protein is Probable cytochrome c oxidase subunit 2 (ctaC).